The following is a 178-amino-acid chain: Large ribosomal subunit protein uL30 (178 aa).

This sequence belongs to the universal ribosomal protein uL30 family. As to quaternary structure, part of the 50S ribosomal subunit.

In Pyrobaculum aerophilum (strain ATCC 51768 / DSM 7523 / JCM 9630 / CIP 104966 / NBRC 100827 / IM2), this protein is Large ribosomal subunit protein uL30.